A 137-amino-acid chain; its full sequence is MATNRRVERVASLIKREVSQMLMSGIKDDRVGAGMVSVTDVVVSGDLQHTKIFVSIYGTPEAKAETMEGLKSAASYVRSELGQRVRLRRTPEVIFVEDKGLERGTQVISLLEQLTREREAREAAQAAAGVVDSTEDA.

It belongs to the RbfA family. As to quaternary structure, monomer. Binds 30S ribosomal subunits, but not 50S ribosomal subunits or 70S ribosomes.

Its subcellular location is the cytoplasm. One of several proteins that assist in the late maturation steps of the functional core of the 30S ribosomal subunit. Associates with free 30S ribosomal subunits (but not with 30S subunits that are part of 70S ribosomes or polysomes). Required for efficient processing of 16S rRNA. May interact with the 5'-terminal helix region of 16S rRNA. This Synechococcus sp. (strain ATCC 27144 / PCC 6301 / SAUG 1402/1) (Anacystis nidulans) protein is Ribosome-binding factor A.